Reading from the N-terminus, the 1226-residue chain is Polyamine-transporting ATPase 13A3 (1226 aa).

Topologically, residues Met-1–Lys-28 are cytoplasmic. Residues Leu-29–Trp-49 lie within the membrane without spanning it. Residues Met-50–Lys-205 are Cytoplasmic-facing. Position 98 is a phosphoserine (Ser-98). Residues Leu-206–Trp-226 traverse the membrane as a helical segment. The Lumenal portion of the chain corresponds to Ser-227–Tyr-232. The chain crosses the membrane as a helical span at residues Tyr-233–Ile-253. At Arg-254–Asp-409 the chain is on the cytoplasmic side. Residues Ala-410–Ile-430 form a helical membrane-spanning segment. Residues Asn-431 to Asp-448 lie on the Lumenal side of the membrane. The chain crosses the membrane as a helical span at residues Ile-449–Ala-469. The Cytoplasmic portion of the chain corresponds to Gln-470–Lys-940. The active-site 4-aspartylphosphate intermediate is the Asp-498. 2 residues coordinate Mg(2+): Asp-498 and Thr-500. Residues Asp-498–Thr-500, Phe-628, Arg-684, and Asp-750 contribute to the ATP site. The residue at position 817 (Ser-817) is a Phosphoserine. Asp-883 provides a ligand contact to Mg(2+). Position 883-887 (Asp-883–Asp-887) interacts with ATP. The chain crosses the membrane as a helical span at residues Phe-941 to Ser-961. Position 962 (Asn-962) is a topological domain, lumenal. The chain crosses the membrane as a helical span at residues Leu-963–Met-983. Residues Ser-984–Ser-999 lie on the Cytoplasmic side of the membrane. Residues Gly-1000–Phe-1020 traverse the membrane as a helical segment. The Lumenal segment spans residues Gln-1021 to Asn-1073. Residues Thr-1074 to Gly-1094 traverse the membrane as a helical segment. Topologically, residues Lys-1095–Tyr-1105 are cytoplasmic. Residues Phe-1106–Val-1126 traverse the membrane as a helical segment. Residues Ala-1127–Arg-1143 lie on the Lumenal side of the membrane. A helical membrane pass occupies residues Val-1144–Val-1164. The Cytoplasmic portion of the chain corresponds to Asp-1165 to Thr-1226.

The protein belongs to the cation transport ATPase (P-type) (TC 3.A.3) family. Type V subfamily.

The protein resides in the recycling endosome membrane. The protein localises to the early endosome membrane. Its subcellular location is the late endosome membrane. It carries out the reaction putrescine(out) + ATP + H2O = putrescine(in) + ADP + phosphate + H(+). ATP-driven pump involved in endocytosis-dependent polyamine transport. Uses ATP as an energy source to transfer polyamine precursor putrescine from the endosomal compartment to the cytosol. The polypeptide is Polyamine-transporting ATPase 13A3 (ATP13A3) (Macaca fascicularis (Crab-eating macaque)).